Reading from the N-terminus, the 89-residue chain is Small ribosomal subunit protein uS15 (89 aa).

It belongs to the universal ribosomal protein uS15 family. As to quaternary structure, part of the 30S ribosomal subunit. Forms a bridge to the 50S subunit in the 70S ribosome, contacting the 23S rRNA.

In terms of biological role, one of the primary rRNA binding proteins, it binds directly to 16S rRNA where it helps nucleate assembly of the platform of the 30S subunit by binding and bridging several RNA helices of the 16S rRNA. Functionally, forms an intersubunit bridge (bridge B4) with the 23S rRNA of the 50S subunit in the ribosome. The sequence is that of Small ribosomal subunit protein uS15 from Shewanella putrefaciens (strain CN-32 / ATCC BAA-453).